The primary structure comprises 244 residues: Small ribosomal subunit protein uS2 (244 aa).

Belongs to the universal ribosomal protein uS2 family.

This chain is Small ribosomal subunit protein uS2, found in Psychromonas ingrahamii (strain DSM 17664 / CCUG 51855 / 37).